A 151-amino-acid chain; its full sequence is Large ribosomal subunit protein bL9 (151 aa).

It belongs to the bacterial ribosomal protein bL9 family.

In terms of biological role, binds to the 23S rRNA. In Nitrosococcus oceani (strain ATCC 19707 / BCRC 17464 / JCM 30415 / NCIMB 11848 / C-107), this protein is Large ribosomal subunit protein bL9.